The following is a 509-amino-acid chain: Probable basic-leucine zipper transcription factor H (509 aa).

Residues 1 to 42 form a disordered region; the sequence is MMNSPRSLDSSDGSVDSSSVYSGTSSFGSSFTSSTGSGFTNS. A compositionally biased stretch (low complexity) spans 10-39; sequence SSDGSVDSSSVYSGTSSFGSSFTSSTGSGF. The bZIP domain occupies 50–113; it reads AKKKKIRQMQ…NENYLKINQL (64 aa). Residues 51–77 form a basic motif region; sequence KKKKIRQMQNRQSAAQYRERKKEYLEK. The interval 78–99 is leucine-zipper; it reads LETIVDNLESDRNQLLQQTKQL. 4 disordered regions span residues 134–185, 223–275, 290–414, and 465–509; these read LLSK…SNNG, FSHL…SRFN, IENV…IINN, and SNNN…GIPK. 6 stretches are compositionally biased toward low complexity: residues 226–248, 255–269, 292–350, 361–414, 465–483, and 490–509; these read LQQQ…SPIP, PIQQ…QNIN, NVNN…SNRS, QQQQ…IINN, SNNN…NSPS, and NGGI…GIPK.

This sequence belongs to the bZIP family.

The protein resides in the nucleus. In terms of biological role, probable transcriptional regulator. This chain is Probable basic-leucine zipper transcription factor H (bzpH), found in Dictyostelium discoideum (Social amoeba).